The primary structure comprises 1312 residues: MGAASGQRGRWPLSPPLLMLSLLVLLLQPSPAPALDPGLQPGNFSPDEAGAQLFAESYNSSAEVVMFQSTVASWAHDTNITEENARRQEEAALVSQEFAEVWGKKAKELYESIWQNFTDSKLRRIIGSIRTLGPANLPLAQRQQYNSLLSNMSRIYSTGKVCFPNKTATCWSLDPELTNILASSRSYAKLLFAWEGWHDAVGIPLKPLYQDFTAISNEAYRQDDFSDTGAFWRSWYESPSFEESLEHIYHQLEPLYLNLHAYVRRALHRRYGDKYVNLRGPIPAHLLGDMWAQSWENIYDMVVPFPDKPNLDVTSTMVQKGWNATHMFRVSEEFFTSLGLSPMPPEFWAESMLEKPTDGREVVCHASAWDFYNRKDFRIKQCTRVTMEQLATVHHEMGHVQYYLQYKDLHVSLRRGANPGFHEAIGDVLALSVSTPAHLHKIGLLDHVTNDIESDINYLLKMALEKIAFLPFGYLVDQWRWGVFSGRTPPSRYNFDWWYLRTKYQGICPPVARNETHFDAGAKFHIPNVTPYIRYFVSFVLQFQFHQALCKEAGHQGPLHQCDIYQSAQAGAKLKQVLQAGCSRPWQEVLKDLVGSDALDAKALLEYFQPVSQWLEEQNQRNGEVLGWPENQWRPPLPDNYPEGIDLETDEAKADRFVEEYDRTAQVLLNEYAEANWQYNTNITIEGSKILLEKSTEVSNHTLKYGTRAKTFDVSNFQNSSIKRIIKKLQNLDRAVLPPKELEEYNQILLDMETTYSLSNICYTNGTCMPLEPDLTNMMATSRKYEELLWAWKSWRDKVGRAILPFFPKYVEFSNKIAKLNGYTDAGDSWRSLYESDNLEQDLEKLYQELQPLYLNLHAYVRRSLHRHYGSEYINLDGPIPAHLLGNMWAQTWSNIYDLVAPFPSAPNIDATEAMIKQGWTPRRIFKEADNFFTSLGLLPVPPEFWNKSMLEKPTDGREVVCHPSAWDFYNGKDFRIKQCTSVNMEDLVIAHHEMGHIQYFMQYKDLPVTFREGANPGFHEAIGDIMALSVSTPKHLYSLNLLSTEGSGYEYDINFLMKMALDKIAFIPFSYLIDQWRWRVFDGSITKENYNQEWWSLRLKYQGLCPPVPRSQGDFDPGSKFHVPANVPYVRYFVSFIIQFQFHEALCRAAGHTGPLHKCDIYQSKEAGKLLADAMKLGYSKPWPEAMKLITGQPNMSASAMMNYFKPLTEWLVTENRRHGETLGWPEYNWAPNTARAEGSTAESNRVNFLGLYLEPQQARVGQWVLLFLGVALLVATVGLAHRLYNIRNHHSLRRPHRGPQFGSEVELRHS.

Residues 1–34 (MGAASGQRGRWPLSPPLLMLSLLVLLLQPSPAPA) form the signal peptide. At 35-1264 (LDPGLQPGNF…LEPQQARVGQ (1230 aa)) the chain is on the extracellular side. 2 Peptidase M2 domains span residues 45 to 629 (SPDE…LGWP) and 648 to 1227 (ETDE…LGWP). 5 N-linked (GlcNAc...) asparagine glycosylation sites follow: N59, N79, N116, N151, and N165. A disulfide bridge connects residues C162 and C170. Y236 lines the chloride pocket. A glycan (N-linked (GlcNAc...) asparagine) is linked at N323. C364 and C382 form a disulfide bridge. H395 lines the Zn(2+) pocket. Residue E396 is the Proton acceptor 1 of the active site. 2 residues coordinate Zn(2+): H399 and E423. A glycan (N-linked (GlcNAc...) asparagine) is linked at N514. H525 acts as the Proton donor 1 in catalysis. Residue R534 coordinates chloride. A disulfide bond links C550 and C562. N682 is a glycosylation site (N-linked (GlcNAc...) asparagine). N700 and N719 each carry an N-linked (GlcNAc...) (complex) asparagine glycan. C762 and C768 form a disulfide bridge. The N-linked (GlcNAc...) asparagine glycan is linked to N765. Chloride-binding residues include R796 and Y834. N947 carries an N-linked (GlcNAc...) asparagine glycan. C962 and C980 are disulfide-bonded. H993 contacts Zn(2+). E994 serves as the catalytic Proton acceptor 2. Positions 997 and 1021 each coordinate Zn(2+). Positions 1095 and 1099 each coordinate chloride. H1123 (proton donor 2) is an active-site residue. R1132 contacts chloride. A disulfide bridge links C1148 with C1160. A glycan (N-linked (GlcNAc...) asparagine) is linked at N1196. The segment at 1220 to 1261 (HGETLGWPEYNWAPNTARAEGSTAESNRVNFLGLYLEPQQAR) is juxtamembrane stalk. Residues 1265-1281 (WVLLFLGVALLVATVGL) form a helical membrane-spanning segment. Residues 1282 to 1312 (AHRLYNIRNHHSLRRPHRGPQFGSEVELRHS) lie on the Cytoplasmic side of the membrane. Position 1305 is a phosphoserine (S1305).

The protein belongs to the peptidase M2 family. As to quaternary structure, monomer and homodimer; homodimerizes following binding to an inhibitor. Interacts with calmodulin (CALM1, CALM2 or CALM3); interaction takes place in the cytoplasmic region and regulates phosphorylation and proteolytic cleavage. The cofactor is Zn(2+). It depends on chloride as a cofactor. Post-translationally, produced following proteolytic cleavage by secretase enzymes that cleave the transmembrane form in the juxtamembrane stalk region upstream of the transmembrane region. Cleavage can take place at different sites of the juxtamembrane stalk region. Phosphorylated by CK2 on Ser-1305; which allows membrane retention. Phosphorylated on tyrosine residues on its extracellular part, promoting cleavage by secretase enzymes and formation of the soluble form (Angiotensin-converting enzyme, soluble form). As to expression, highly expressed in kidney and lung; not expressed in the liver. In the brain, expressed in the cerebral cortex, hippocampus, cerebellum and basal ganglia/brainstem. Highly expressed in dopamine receptor DRD1-expressing neurons in the dorsal striatum and the nucleus accumbens of the brain. In terms of tissue distribution, specifically expressed in spermatocytes, adult testis.

It localises to the cell membrane. It is found in the cytoplasm. The protein resides in the secreted. The enzyme catalyses Release of a C-terminal dipeptide, oligopeptide-|-Xaa-Yaa, when Xaa is not Pro, and Yaa is neither Asp nor Glu. Thus, conversion of angiotensin I to angiotensin II, with increase in vasoconstrictor activity, but no action on angiotensin II.. It catalyses the reaction angiotensin I + H2O = L-histidyl-L-leucine + angiotensin II. The catalysed reaction is bradykinin + H2O = L-Phe-L-Arg + bradykinin(1-7). It carries out the reaction substance P + H2O = substance P(1-9) + L-Leu-L-Met-NH2. The enzyme catalyses substance P + H2O = substance P(1-8) + Gly-L-Leu-L-Met-NH2. It catalyses the reaction substance P + H2O = L-Phe-L-Phe-Gly-L-Leu-L-Met-NH2 + substance P(1-6). The catalysed reaction is neurotensin + H2O = neurotensin(1-11) + L-isoleucyl-L-leucine. It carries out the reaction goralatide + H2O = N-acetyl-L-seryl-L-aspartate + L-lysyl-L-proline. The enzyme catalyses Met-enkephalin + H2O = L-phenylalanyl-L-methionine + L-tyrosylglycylglycine. It catalyses the reaction Leu-enkephalin + H2O = L-tyrosylglycylglycine + L-phenylalanyl-L-leucine. The catalysed reaction is Met-enkephalin-Arg-Phe + H2O = L-arginyl-L-phenylalanine + Met-enkephalin. Its activity is regulated as follows. The dipeptidyl carboxypeptidase activity is specifically inhibited by lisinopril, captopril and enalaprilat. The N-terminal catalytic domain, but not the C-terminal catalytic domain, is specifically inhibited by the phosphinic peptide RXP 407. With respect to regulation, the putative GPIase activity is nearly insensitive to captopril. Functionally, dipeptidyl carboxypeptidase that removes dipeptides from the C-terminus of a variety of circulating hormones, such as angiotensin I, bradykinin or enkephalins, thereby playing a key role in the regulation of blood pressure, electrolyte homeostasis or synaptic plasticity. Composed of two similar catalytic domains, each possessing a functional active site, with different selectivity for substrates. Plays a major role in the angiotensin-renin system that regulates blood pressure and sodium retention by the kidney by converting angiotensin I to angiotensin II, resulting in an increase of the vasoconstrictor activity of angiotensin. Also able to inactivate bradykinin, a potent vasodilator, and therefore enhance the blood pressure response. Acts as a regulator of synaptic transmission by mediating cleavage of neuropeptide hormones, such as substance P, neurotensin or enkephalins. Catalyzes degradation of different enkephalin neuropeptides (Met-enkephalin, Leu-enkephalin, Met-enkephalin-Arg-Phe and possibly Met-enkephalin-Arg-Gly-Leu). Acts as a regulator of synaptic plasticity in the nucleus accumbens of the brain by mediating cleavage of Met-enkephalin-Arg-Phe, a strong ligand of Mu-type opioid receptor OPRM1, into Met-enkephalin. Met-enkephalin-Arg-Phe cleavage by ACE decreases activation of OPRM1, leading to long-term synaptic potentiation of glutamate release. Also acts as a regulator of hematopoietic stem cell differentiation by mediating degradation of hemoregulatory peptide N-acetyl-SDKP (AcSDKP). Acts as a regulator of cannabinoid signaling pathway by mediating degradation of hemopressin, an antagonist peptide of the cannabinoid receptor CNR1. Involved in amyloid-beta metabolism by catalyzing degradation of Amyloid-beta protein 40 and Amyloid-beta protein 42 peptides, thereby preventing plaque formation. Catalyzes cleavage of cholecystokinin (maturation of Cholecystokinin-8 and Cholecystokinin-5) and Gonadoliberin-1 (both maturation and degradation) hormones. Degradation of hemoregulatory peptide N-acetyl-SDKP (AcSDKP) and amyloid-beta proteins is mediated by the N-terminal catalytic domain, while angiotensin I and cholecystokinin cleavage is mediated by the C-terminal catalytic region. In terms of biological role, soluble form that is released in blood plasma and other body fluids following proteolytic cleavage in the juxtamembrane stalk region. Its function is as follows. Isoform produced by alternative promoter usage that is specifically expressed in spermatocytes and adult testis, and which is required for male fertility. In contrast to somatic isoforms, only contains one catalytic domain. Acts as a dipeptidyl carboxypeptidase that removes dipeptides from the C-terminus of substrates. The identity of substrates that are needed for male fertility is unknown. Isoform Testis-specific and isoform Somatic have distinct activities and cannot completely compensate for the loss of the other when expressed in somatic tissues or testis. May also have a glycosidase activity which releases GPI-anchored proteins from the membrane by cleaving the mannose linkage in the GPI moiety. The GPIase activity was reported to be essential for the egg-binding ability of the sperm. This activity is however unclear and has been challenged by other groups, suggesting that it may be indirect. This Mus musculus (Mouse) protein is Angiotensin-converting enzyme.